Reading from the N-terminus, the 537-residue chain is Ribonuclease III domain-containing protein RNC1, chloroplastic (537 aa).

The transit peptide at 1–51 (MELCSSSPSSSLLRICSSSAPEISFSSSISQFPSKTQSILTKSRFQNLRIC) directs the protein to the chloroplast. 2 consecutive RNase III domains span residues 141–283 (LLEV…LCFG) and 415–515 (EHPR…TIYG).

Interacts with RNA. Part of large ribonucleo-protein particles that contain CAF1 and/or CAF2.

The protein localises to the plastid. It is found in the chloroplast. Its function is as follows. Binds specific group II introns in chloroplasts and facilitates their splicing. Acts on both subgroup IIA and subgroup IIB introns. The substrates of the subgroup II also require the CRM domain proteins CAF1 or CAF2. Binds both single-stranded and double-stranded RNA non-specifically, but lacks endonuclease activity. Required for plastid ribosome biogenesis. This Arabidopsis thaliana (Mouse-ear cress) protein is Ribonuclease III domain-containing protein RNC1, chloroplastic.